The following is a 400-amino-acid chain: Delta(12) fatty acid desaturase (400 aa).

The helical transmembrane segment at 91-111 (LAWPAYWIMQGIVCTGIWVLA) threads the bilayer. Residues 112-116 (HECGH) carry the Histidine box-1 motif. The Histidine box-2 motif lies at 148–152 (HSKHH). 3 helical membrane passes run 199-219 (IVTL…YLIM), 245-265 (FFDI…LIYA), and 277-297 (YYII…FLQH). Positions 339 to 343 (HVAHH) match the Histidine box-3 motif.

This sequence belongs to the fatty acid desaturase type 1 family.

The protein resides in the membrane. The enzyme catalyses (9Z)-octadecenoyl-CoA + 2 Fe(II)-[cytochrome b5] + O2 + 2 H(+) = (9Z,12Z)-octadecadienoyl-CoA + 2 Fe(III)-[cytochrome b5] + 2 H2O. It carries out the reaction (9Z)-hexadecenoyl-CoA + 2 Fe(II)-[cytochrome b5] + O2 + 2 H(+) = (9Z,12Z)-hexadecadienoyl-CoA + 2 Fe(III)-[cytochrome b5] + 2 H2O. The protein operates within lipid metabolism; polyunsaturated fatty acid biosynthesis. Its function is as follows. Catalyzes the desaturation of oleic acid (Delta(9)-18:1) to linoleic acid (Delta(9), Delta(12)-18:2). This chain is Delta(12) fatty acid desaturase, found in Mortierella isabellina (Filamentous fungus).